The following is a 192-amino-acid chain: Mitochondrial import inner membrane translocase subunit TIM18 (192 aa).

Residues 1–42 constitute a mitochondrion transit peptide; the sequence is MLLFPGLKPVLNASTVIVNPVRAVFPGLVLSTKRSFYSINRL. At 43–88 the chain is on the mitochondrial matrix side; the sequence is NAENKINDIANTSKEASSSVQMFKPPEFSQFKDSYQKDYERIAKYT. The chain crosses the membrane as a helical span at residues 89–109; sequence LIPLTMVPFYASFTGGVINPL. Residues 110–113 are Mitochondrial intermembrane-facing; that stretch reads LDAS. Residues 114 to 134 form a helical membrane-spanning segment; it reads LSSIFLIYLQYGFTSCIIDYI. Over 135-144 the chain is Mitochondrial matrix; the sequence is PKEKYPRWHK. The helical transmembrane segment at 145 to 165 threads the bilayer; it reads LALYCLYGGSMLSLYGIYELE. Residues 166–192 lie on the Mitochondrial intermembrane side of the membrane; sequence TKNNGFVDLVKKLWNENDDHLYIFGRN.

The protein belongs to the CybS family. In terms of assembly, component of the TIM22 complex, whose core is composed of TIM18, TIM22 and TIM54, associated with the peripheral proteins MRS5/TIM12 and the 70 kDa heterohexamer composed of TIM9 and TIM10 (or TIM8 and TIM13).

The protein resides in the mitochondrion inner membrane. Its function is as follows. Component of the TIM22 complex, a complex that mediates the import and insertion of multi-pass transmembrane proteins into the mitochondrial inner membrane. The TIM22 complex forms a twin-pore translocase that uses the membrane potential as external driving force. Its role in the complex is unclear but it may be involved in the assembly and stabilization of the TIM22 complex. This Saccharomyces cerevisiae (strain ATCC 204508 / S288c) (Baker's yeast) protein is Mitochondrial import inner membrane translocase subunit TIM18 (TIM18).